The following is a 208-amino-acid chain: Putative dioxygenase RF_0617 (208 aa).

Belongs to the intradiol ring-cleavage dioxygenase family.

The protein is Putative dioxygenase RF_0617 of Rickettsia felis (strain ATCC VR-1525 / URRWXCal2) (Rickettsia azadi).